A 673-amino-acid chain; its full sequence is uncharacterized protein (673 aa).

Residues 1-24 (MKIHNIIKIIIVVCLEGFALTSFA) form the signal peptide. A run of 6 helical transmembrane segments spans residues 224–244 (NAIG…MVLN), 253–273 (IALF…LGPL), 410–430 (IILI…LYFI), 436–456 (CMIT…MMLF), 469–489 (VSLS…LLIT), and 562–582 (VVSI…FYYF). The disordered stretch occupies residues 624–673 (AQATQGKPPSSGDMPGDGGSKRSEGQKGDDSFISSGGNSSGDSLSSSGGK). Residues 642–653 (GSKRSEGQKGDD) are compositionally biased toward basic and acidic residues. Residues 654–673 (SFISSGGNSSGDSLSSSGGK) show a composition bias toward low complexity.

This sequence belongs to the TrbL/VirB6 family.

The protein resides in the cell membrane. This is an uncharacterized protein from Rickettsia bellii (strain RML369-C).